We begin with the raw amino-acid sequence, 185 residues long: Ribosome-recycling factor (185 aa).

Belongs to the RRF family.

It localises to the cytoplasm. Responsible for the release of ribosomes from messenger RNA at the termination of protein biosynthesis. May increase the efficiency of translation by recycling ribosomes from one round of translation to another. The protein is Ribosome-recycling factor of Carboxydothermus hydrogenoformans (strain ATCC BAA-161 / DSM 6008 / Z-2901).